Here is a 279-residue protein sequence, read N- to C-terminus: Acetyl-coenzyme A carboxylase carboxyl transferase subunit beta (279 aa).

The 257-residue stretch at Met23–Pro279 folds into the CoA carboxyltransferase N-terminal domain. Zn(2+)-binding residues include Cys27, Cys30, Cys46, and Cys49. The C4-type zinc-finger motif lies at Cys27–Cys49.

The protein belongs to the AccD/PCCB family. As to quaternary structure, acetyl-CoA carboxylase is a heterohexamer composed of biotin carboxyl carrier protein (AccB), biotin carboxylase (AccC) and two subunits each of ACCase subunit alpha (AccA) and ACCase subunit beta (AccD). The cofactor is Zn(2+).

The protein localises to the cytoplasm. It catalyses the reaction N(6)-carboxybiotinyl-L-lysyl-[protein] + acetyl-CoA = N(6)-biotinyl-L-lysyl-[protein] + malonyl-CoA. It functions in the pathway lipid metabolism; malonyl-CoA biosynthesis; malonyl-CoA from acetyl-CoA: step 1/1. In terms of biological role, component of the acetyl coenzyme A carboxylase (ACC) complex. Biotin carboxylase (BC) catalyzes the carboxylation of biotin on its carrier protein (BCCP) and then the CO(2) group is transferred by the transcarboxylase to acetyl-CoA to form malonyl-CoA. The chain is Acetyl-coenzyme A carboxylase carboxyl transferase subunit beta from Chlorobium phaeobacteroides (strain DSM 266 / SMG 266 / 2430).